A 366-amino-acid chain; its full sequence is Protein sigma-NS (366 aa).

The tract at residues 1–11 (MASSLRAAISK) is important for ssRNA-binding and formation of complexes.

Belongs to the orthoreovirus sigma-NS protein family. In terms of assembly, homooligomer; in presence of RNA. Interacts with protein mu-NS; this interaction allows the localization of sigma-NS to the viral factories. Interacts with host G3BP1 (via C-terminus); this interaction induces the relocalization of G3BP1 and other SG proteins to the viral factories periphery.

It localises to the host cytoplasm. Functionally, protein that binds to ssRNA and participates with protein mu-NS in forming the matrix of viral factories, which are large inclusions in the host cytoplasm where replication intermediates are assembled and viral RNA replication takes place. Plays a role in the inhibition of the integrated stress response (ISR) to escape from host cell translational shutoff. Participates in the disruption of stress granules (SG) through its association with host G3BP1 and mu-NS. The protein is Protein sigma-NS (S3) of Mammalia (T3D).